The sequence spans 120 residues: NAD(P)H-quinone oxidoreductase subunit 3 (120 aa).

Helical transmembrane passes span 1 to 21 (MFVL…SLVP), 64 to 84 (MFAL…PWAV), and 89 to 109 (LGLL…VALV).

Belongs to the complex I subunit 3 family. NDH-1 can be composed of about 15 different subunits; different subcomplexes with different compositions have been identified which probably have different functions.

Its subcellular location is the cellular thylakoid membrane. The catalysed reaction is a plastoquinone + NADH + (n+1) H(+)(in) = a plastoquinol + NAD(+) + n H(+)(out). It carries out the reaction a plastoquinone + NADPH + (n+1) H(+)(in) = a plastoquinol + NADP(+) + n H(+)(out). In terms of biological role, NDH-1 shuttles electrons from an unknown electron donor, via FMN and iron-sulfur (Fe-S) centers, to quinones in the respiratory and/or the photosynthetic chain. The immediate electron acceptor for the enzyme in this species is believed to be plastoquinone. Couples the redox reaction to proton translocation, and thus conserves the redox energy in a proton gradient. Cyanobacterial NDH-1 also plays a role in inorganic carbon-concentration. The protein is NAD(P)H-quinone oxidoreductase subunit 3 of Trichormus variabilis (strain ATCC 29413 / PCC 7937) (Anabaena variabilis).